A 439-amino-acid polypeptide reads, in one-letter code: Ribosomal protein uS12 methylthiotransferase RimO (439 aa).

The region spanning 7–119 (KQLCLISLGC…IDIMIAKKQN (113 aa)) is the MTTase N-terminal domain. [4Fe-4S] cluster-binding residues include C16, C50, C82, C151, C155, and C158. The Radical SAM core domain occupies 137–365 (TGSSVHAYVK…NKIALKHQNN (229 aa)).

This sequence belongs to the methylthiotransferase family. RimO subfamily. Requires [4Fe-4S] cluster as cofactor.

It localises to the cytoplasm. It carries out the reaction L-aspartate(89)-[ribosomal protein uS12]-hydrogen + (sulfur carrier)-SH + AH2 + 2 S-adenosyl-L-methionine = 3-methylsulfanyl-L-aspartate(89)-[ribosomal protein uS12]-hydrogen + (sulfur carrier)-H + 5'-deoxyadenosine + L-methionine + A + S-adenosyl-L-homocysteine + 2 H(+). In terms of biological role, catalyzes the methylthiolation of an aspartic acid residue of ribosomal protein uS12. The polypeptide is Ribosomal protein uS12 methylthiotransferase RimO (Helicobacter pylori (strain Shi470)).